The sequence spans 383 residues: 8-amino-7-oxononanoate synthase (383 aa).

Arginine 21 provides a ligand contact to substrate. 108 to 109 (GY) is a pyridoxal 5'-phosphate binding site. Histidine 133 serves as a coordination point for substrate. Residues serine 179, histidine 207, and threonine 233 each contribute to the pyridoxal 5'-phosphate site. An N6-(pyridoxal phosphate)lysine modification is found at lysine 236. Threonine 350 lines the substrate pocket.

The protein belongs to the class-II pyridoxal-phosphate-dependent aminotransferase family. BioF subfamily. Homodimer. Pyridoxal 5'-phosphate is required as a cofactor.

It carries out the reaction 6-carboxyhexanoyl-[ACP] + L-alanine + H(+) = (8S)-8-amino-7-oxononanoate + holo-[ACP] + CO2. It functions in the pathway cofactor biosynthesis; biotin biosynthesis. Functionally, catalyzes the decarboxylative condensation of pimeloyl-[acyl-carrier protein] and L-alanine to produce 8-amino-7-oxononanoate (AON), [acyl-carrier protein], and carbon dioxide. This is 8-amino-7-oxononanoate synthase from Serratia proteamaculans (strain 568).